Reading from the N-terminus, the 251-residue chain is Hydroxyacylglutathione hydrolase (251 aa).

His54, His56, Asp58, His59, His113, Asp140, and His178 together coordinate Zn(2+).

The protein belongs to the metallo-beta-lactamase superfamily. Glyoxalase II family. Monomer. It depends on Zn(2+) as a cofactor.

It catalyses the reaction an S-(2-hydroxyacyl)glutathione + H2O = a 2-hydroxy carboxylate + glutathione + H(+). The protein operates within secondary metabolite metabolism; methylglyoxal degradation; (R)-lactate from methylglyoxal: step 2/2. Thiolesterase that catalyzes the hydrolysis of S-D-lactoyl-glutathione to form glutathione and D-lactic acid. This Synechococcus sp. (strain CC9902) protein is Hydroxyacylglutathione hydrolase.